The following is a 409-amino-acid chain: Transforming growth factor beta-3 proprotein (409 aa).

The first 21 residues, 1–21 (MHLQRALVVLALLNFATVSLS), serve as a signal peptide directing secretion. N-linked (GlcNAc...) asparagine glycosylation is found at N72, N133, and N140. Residues 259-261 (RGD) carry the Cell attachment site motif. Disulfide bonds link C304–C313, C312–C375, C341–C406, and C345–C408.

The protein belongs to the TGF-beta family. As to quaternary structure, interacts with ASPN. Latency-associated peptide: Homodimer; disulfide-linked. Latency-associated peptide: Interacts with Transforming growth factor beta-3 (TGF-beta-3) chain; interaction is non-covalent and maintains (TGF-beta-3) in a latent state. Latency-associated peptide: Interacts with LRRC32/GARP; leading to regulate activation of TGF-beta-3 and promote epithelial fusion during palate development. Latency-associated peptide: Interacts (via cell attachment site) with integrins, leading to release of the active TGF-beta-3. Transforming growth factor beta-3: Homodimer; disulfide-linked. Transforming growth factor beta-3: Interacts with TGF-beta receptors (TGFBR1 and TGFBR2), leading to signal transduction. In terms of processing, transforming growth factor beta-3 proprotein: The precursor proprotein is cleaved in the Golgi apparatus to form Transforming growth factor beta-3 (TGF-beta-3) and Latency-associated peptide (LAP) chains, which remain non-covalently linked, rendering TGF-beta-3 inactive.

Its subcellular location is the secreted. The protein localises to the extracellular space. It is found in the extracellular matrix. Its function is as follows. Transforming growth factor beta-3 proprotein: Precursor of the Latency-associated peptide (LAP) and Transforming growth factor beta-3 (TGF-beta-3) chains, which constitute the regulatory and active subunit of TGF-beta-3, respectively. Required to maintain the Transforming growth factor beta-3 (TGF-beta-3) chain in a latent state during storage in extracellular matrix. Associates non-covalently with TGF-beta-3 and regulates its activation via interaction with 'milieu molecules', such as LTBP1 and LRRC32/GARP, that control activation of TGF-beta-3. Interaction with integrins results in distortion of the Latency-associated peptide chain and subsequent release of the active TGF-beta-3. In terms of biological role, transforming growth factor beta-3: Multifunctional protein that regulates embryogenesis and cell differentiation and is required in various processes such as secondary palate development. Activation into mature form follows different steps: following cleavage of the proprotein in the Golgi apparatus, Latency-associated peptide (LAP) and Transforming growth factor beta-3 (TGF-beta-3) chains remain non-covalently linked rendering TGF-beta-3 inactive during storage in extracellular matrix. At the same time, LAP chain interacts with 'milieu molecules', such as LTBP1 and LRRC32/GARP that control activation of TGF-beta-3 and maintain it in a latent state during storage in extracellular milieus. TGF-beta-3 is released from LAP by integrins: integrin-binding results in distortion of the LAP chain and subsequent release of the active TGF-beta-3. Once activated following release of LAP, TGF-beta-3 acts by binding to TGF-beta receptors (TGFBR1 and TGFBR2), which transduce signal. The sequence is that of Transforming growth factor beta-3 proprotein (TGFB3) from Sus scrofa (Pig).